The sequence spans 373 residues: Histone-lysine N-methyltransferase SETD7 (373 aa).

Residues 1–20 (MDSDDDNMEEVVEGPLDEDD) are disordered. MORN repeat units lie at residues 36–58 (FEGHFVHGEKNGKGKFFFFDGST), 59–81 (LEGFYVDDALQGQGVYTYEDGGA), and 106–128 (FRGRYKDNIRYGMCWVYYPDGAC). Residues 214-336 (QRVYVGQSLI…KDEELTVAYG (123 aa)) form the SET domain. Residues 226-228 (AGE), asparagine 296, and histidine 297 each bind S-adenosyl-L-methionine.

The protein belongs to the class V-like SAM-binding methyltransferase superfamily. Histone-lysine methyltransferase family. SET7 subfamily.

Its subcellular location is the nucleus. It is found in the chromosome. The catalysed reaction is L-lysyl(4)-[histone H3] + S-adenosyl-L-methionine = N(6)-methyl-L-lysyl(4)-[histone H3] + S-adenosyl-L-homocysteine + H(+). It catalyses the reaction L-lysyl-[protein] + S-adenosyl-L-methionine = N(6)-methyl-L-lysyl-[protein] + S-adenosyl-L-homocysteine + H(+). Functionally, histone methyltransferase that specifically monomethylates 'Lys-4' of histone H3. H3 'Lys-4' methylation represents a specific tag for epigenetic transcriptional activation. Plays a central role in the transcriptional activation of genes. Also has methyltransferase activity toward non-histone proteins. The sequence is that of Histone-lysine N-methyltransferase SETD7 (setd7) from Danio rerio (Zebrafish).